The primary structure comprises 179 residues: Ubiquitin-conjugating enzyme E2 C (179 aa).

A compositionally biased stretch (polar residues) spans 1-14 (MASQNRDPAATSVT). Positions 1-31 (MASQNRDPAATSVTAARKGAEPSGGAARGPV) are disordered. Ala2 is modified (N-acetylalanine). Ser3 carries the post-translational modification Phosphoserine. The UBC core domain occupies 30-175 (PVGKRLQQEL…LQETYSKQVT (146 aa)). Cys114 acts as the Glycyl thioester intermediate in catalysis.

It belongs to the ubiquitin-conjugating enzyme family. Component of the APC/C complex, composed of at least 14 distinct subunits that assemble into a complex of at least 19 chains with a combined molecular mass of around 1.2 MDa. Within this complex, directly interacts with ANAPC2. Autoubiquitinated by the APC/C complex, leading to its degradation by the proteasome. Its degradation plays a central role in APC/C regulation, allowing cyclin-A accumulation before S phase entry. APC/C substrates inhibit the autoubiquitination of UBE2C/UBCH10 but not its E2 function, hence APC/C remaining active until its substrates have been destroyed.

It carries out the reaction S-ubiquitinyl-[E1 ubiquitin-activating enzyme]-L-cysteine + [E2 ubiquitin-conjugating enzyme]-L-cysteine = [E1 ubiquitin-activating enzyme]-L-cysteine + S-ubiquitinyl-[E2 ubiquitin-conjugating enzyme]-L-cysteine.. It catalyses the reaction S-ubiquitinyl-[E1 ubiquitin-activating enzyme]-L-cysteine + [acceptor protein]-L-lysine = [E1 ubiquitin-activating enzyme]-L-cysteine + N(6)-monoubiquitinyl-[acceptor protein]-L-lysine.. Its pathway is protein modification; protein ubiquitination. Its function is as follows. Accepts ubiquitin from the E1 complex and catalyzes its covalent attachment to other proteins. In vitro catalyzes 'Lys-11'- and 'Lys-48'-linked polyubiquitination. Acts as an essential factor of the anaphase promoting complex/cyclosome (APC/C), a cell cycle-regulated ubiquitin ligase that controls progression through mitosis. Acts by initiating 'Lys-11'-linked polyubiquitin chains on APC/C substrates, leading to the degradation of APC/C substrates by the proteasome and promoting mitotic exit. This is Ubiquitin-conjugating enzyme E2 C (UBE2C) from Macaca fascicularis (Crab-eating macaque).